A 97-amino-acid chain; its full sequence is Sperm protein associated with the nucleus on the X chromosome A (97 aa).

A disordered region spans residues 1 to 49 (MDKQSSAGGVKRSVPCDSNEANEMMPETPTGDSDPQPAPKKMKTSESST). The short motif at 37–45 (PAPKKMKTS) is the Nuclear localization signal element.

The protein belongs to the SPAN-X family. As to expression, detected in testis and sperm.

It localises to the cytoplasm. Its subcellular location is the nucleus. The protein is Sperm protein associated with the nucleus on the X chromosome A of Homo sapiens (Human).